The sequence spans 428 residues: uncharacterized protein (428 aa).

Positions 241 to 351 (KEEEEQSVGK…KLLGGCERVE (111 aa)) constitute a Glutaredoxin domain. The span at 386-401 (EDDDDDDDEGDDDESV) shows a compositional bias: acidic residues. The segment at 386–405 (EDDDDDDDEGDDDESVKEER) is disordered.

This is an uncharacterized protein from Arabidopsis thaliana (Mouse-ear cress).